A 229-amino-acid chain; its full sequence is 5'-methylthioadenosine/S-adenosylhomocysteine nucleosidase (229 aa).

The active-site Proton acceptor is glutamate 12. Substrate is bound by residues glycine 78, isoleucine 152, and 173-174 (ME). Aspartate 197 functions as the Proton donor in the catalytic mechanism.

The protein belongs to the PNP/UDP phosphorylase family. MtnN subfamily.

The catalysed reaction is S-adenosyl-L-homocysteine + H2O = S-(5-deoxy-D-ribos-5-yl)-L-homocysteine + adenine. It carries out the reaction S-methyl-5'-thioadenosine + H2O = 5-(methylsulfanyl)-D-ribose + adenine. The enzyme catalyses 5'-deoxyadenosine + H2O = 5-deoxy-D-ribose + adenine. The protein operates within amino-acid biosynthesis; L-methionine biosynthesis via salvage pathway; S-methyl-5-thio-alpha-D-ribose 1-phosphate from S-methyl-5'-thioadenosine (hydrolase route): step 1/2. In terms of biological role, catalyzes the irreversible cleavage of the glycosidic bond in both 5'-methylthioadenosine (MTA) and S-adenosylhomocysteine (SAH/AdoHcy) to adenine and the corresponding thioribose, 5'-methylthioribose and S-ribosylhomocysteine, respectively. Also cleaves 5'-deoxyadenosine, a toxic by-product of radical S-adenosylmethionine (SAM) enzymes, into 5-deoxyribose and adenine. The polypeptide is 5'-methylthioadenosine/S-adenosylhomocysteine nucleosidase (Haemophilus influenzae (strain PittGG)).